Consider the following 332-residue polypeptide: 5-dehydro-2-deoxygluconokinase (332 aa).

It belongs to the carbohydrate kinase PfkB family.

It catalyses the reaction 5-dehydro-2-deoxy-D-gluconate + ATP = 6-phospho-5-dehydro-2-deoxy-D-gluconate + ADP + H(+). Its pathway is polyol metabolism; myo-inositol degradation into acetyl-CoA; acetyl-CoA from myo-inositol: step 5/7. Its function is as follows. Catalyzes the phosphorylation of 5-dehydro-2-deoxy-D-gluconate (2-deoxy-5-keto-D-gluconate or DKG) to 6-phospho-5-dehydro-2-deoxy-D-gluconate (DKGP). The sequence is that of 5-dehydro-2-deoxygluconokinase from Bacillus thuringiensis subsp. konkukian (strain 97-27).